Consider the following 387-residue polypeptide: Putative transmembrane protein At3g54730 (387 aa).

Pro residues predominate over residues 10–25 (PAPPLLLPSPNPPPCA). The interval 10 to 45 (PAPPLLLPSPNPPPCALPQDLTSLVSPSEPPDPPDP) is disordered. 8 helical membrane passes run 97–117 (VFPL…HPLV), 128–148 (GSNF…ILQF), 154–174 (VMIS…MILL), 186–206 (VLFS…VGLI), 221–241 (IQKL…FLEI), 292–312 (SWCF…YPLE), 335–355 (FSTI…FIFF), and 362–382 (PFVA…LNHF).

It localises to the membrane. This Arabidopsis thaliana (Mouse-ear cress) protein is Putative transmembrane protein At3g54730.